The chain runs to 272 residues: Tryptophan synthase alpha chain (272 aa).

Residues E49 and D60 each act as proton acceptor in the active site.

This sequence belongs to the TrpA family. As to quaternary structure, tetramer of two alpha and two beta chains.

The enzyme catalyses (1S,2R)-1-C-(indol-3-yl)glycerol 3-phosphate + L-serine = D-glyceraldehyde 3-phosphate + L-tryptophan + H2O. It participates in amino-acid biosynthesis; L-tryptophan biosynthesis; L-tryptophan from chorismate: step 5/5. In terms of biological role, the alpha subunit is responsible for the aldol cleavage of indoleglycerol phosphate to indole and glyceraldehyde 3-phosphate. This Methylibium petroleiphilum (strain ATCC BAA-1232 / LMG 22953 / PM1) protein is Tryptophan synthase alpha chain.